Here is a 338-residue protein sequence, read N- to C-terminus: Probable replication factor C subunit 2 (338 aa).

60 to 67 (GPPGTGKT) is an ATP binding site.

The protein belongs to the activator 1 small subunits family. As to quaternary structure, heteropentamer of various rfc subunits that forms a complex (RFC) with PCNA in the presence of ATP.

The protein localises to the nucleus. Functionally, the elongation of primed DNA templates by DNA polymerase delta and epsilon requires the action of the accessory proteins PCNA and activator 1. This is Probable replication factor C subunit 2 (rfc2) from Dictyostelium discoideum (Social amoeba).